Consider the following 161-residue polypeptide: Nucleotide-binding protein Rfer_2692 (161 aa).

Belongs to the YajQ family.

In terms of biological role, nucleotide-binding protein. This Albidiferax ferrireducens (strain ATCC BAA-621 / DSM 15236 / T118) (Rhodoferax ferrireducens) protein is Nucleotide-binding protein Rfer_2692.